The primary structure comprises 168 residues: MPRSRINGNFIDKTFSIVANILLRIIPTTSGEREAFTYYRDGMSAQSEGNYAEALQNYYEAMRLEMDPYDRSYILYNIGLIHTSNGEHTKALEYYFRALERNPFLPQALNNMAVICHYRGEQAIRQGDSEIAEAWFDQAAEYWKQAIALTPGNYIEAQNWLKITRRFE.

TPR repeat units lie at residues 35–68 (AFTY…EMDP), 72–105 (SYIL…NPFL), and 120–153 (GEQA…TPGN).

Belongs to the Ycf3 family.

The protein localises to the plastid. It localises to the chloroplast thylakoid membrane. Functionally, essential for the assembly of the photosystem I (PSI) complex. May act as a chaperone-like factor to guide the assembly of the PSI subunits. The chain is Photosystem I assembly protein Ycf3 from Pelargonium hortorum (Common geranium).